The following is a 288-amino-acid chain: Glycine--tRNA ligase alpha subunit (288 aa).

This sequence belongs to the class-II aminoacyl-tRNA synthetase family. As to quaternary structure, tetramer of two alpha and two beta subunits.

Its subcellular location is the cytoplasm. The enzyme catalyses tRNA(Gly) + glycine + ATP = glycyl-tRNA(Gly) + AMP + diphosphate. The polypeptide is Glycine--tRNA ligase alpha subunit (Rickettsia canadensis (strain McKiel)).